A 258-amino-acid polypeptide reads, in one-letter code: NAD-dependent protein deacylase (258 aa).

A Deacetylase sirtuin-type domain is found at 3–258 (ERQLEKSIEH…LPALMRGLSA (256 aa)). 28–48 (GAGMSADSGLETYRDDKTGLW) contacts NAD(+). Positions 73 and 76 each coordinate substrate. NAD(+) is bound at residue 109-112 (QNID). Catalysis depends on histidine 127, which acts as the Proton acceptor. Zn(2+) is bound by residues cysteine 135, cysteine 138, cysteine 161, and cysteine 164. NAD(+) is bound by residues 201-203 (GTS) and alanine 245.

The protein belongs to the sirtuin family. Class III subfamily. The cofactor is Zn(2+).

It is found in the cytoplasm. It catalyses the reaction N(6)-acetyl-L-lysyl-[protein] + NAD(+) + H2O = 2''-O-acetyl-ADP-D-ribose + nicotinamide + L-lysyl-[protein]. The enzyme catalyses N(6)-succinyl-L-lysyl-[protein] + NAD(+) + H2O = 2''-O-succinyl-ADP-D-ribose + nicotinamide + L-lysyl-[protein]. Its function is as follows. NAD-dependent lysine deacetylase and desuccinylase that specifically removes acetyl and succinyl groups on target proteins. Modulates the activities of several proteins which are inactive in their acylated form. The chain is NAD-dependent protein deacylase from Corynebacterium glutamicum (strain ATCC 13032 / DSM 20300 / JCM 1318 / BCRC 11384 / CCUG 27702 / LMG 3730 / NBRC 12168 / NCIMB 10025 / NRRL B-2784 / 534).